The primary structure comprises 457 residues: Ribosomal RNA-processing protein 8 (457 aa).

The segment at 47–237 is disordered; the sequence is LEAASLSQQT…KSDSQESRAG (191 aa). Residues 51–61 show a composition bias toward polar residues; the sequence is SLSQQTPSLPG. 3 positions are modified to phosphoserine: S62, S64, and S105. The span at 129-138 shows a compositional bias: basic and acidic residues; it reads GEEKGKRKCQ. Positions 139–183 are enriched in polar residues; sequence EYSSLHLTQPLDSVDQTVHNSRTSTATIDPSKPSPESMSPNSSHT. Residues S172 and S177 each carry the phosphoserine modification. A compositionally biased stretch (basic residues) spans 184 to 203; the sequence is LSRKQWRNRQKNKRRHKNKF. S-adenosyl-L-methionine-binding residues include H282, G317, D335, D347, M348, and C364.

This sequence belongs to the methyltransferase superfamily. RRP8 family. Component of the eNoSC complex, composed of SIRT1, SUV39H1 and RRP8.

The protein localises to the nucleus. It localises to the nucleolus. Essential component of the eNoSC (energy-dependent nucleolar silencing) complex, a complex that mediates silencing of rDNA in response to intracellular energy status and acts by recruiting histone-modifying enzymes. The eNoSC complex is able to sense the energy status of cell: upon glucose starvation, elevation of NAD(+)/NADP(+) ratio activates SIRT1, leading to histone H3 deacetylation followed by dimethylation of H3 at 'Lys-9' (H3K9me2) by SUV39H1 and the formation of silent chromatin in the rDNA locus. In the complex, RRP8 binds to H3K9me2 and probably acts as a methyltransferase. Its substrates are however unknown. The polypeptide is Ribosomal RNA-processing protein 8 (Rrp8) (Mus musculus (Mouse)).